The sequence spans 274 residues: MQQLQNVIENAFERRAEITPANADTVTREAVNQVIALLDSGALRVAEKIDGQWVTHQWLKKAVLLSFRINDNKVMDGAETRYYDKVPMKFADYDEARFQKEGFRVVPPATVRQGAFIARNTVLMPSYVNIGAYVDEGSMVDTWATVGSCAQIGKNVHLSGGVGIGGVLEPLQANPTIIEDNCFIGARSEVVEGVIVEEGSVISMGVYLGQSTRIYDRETGEVHYGRVPAGSVVVSGNLPSKDGSYSLYCAVIVKKVDAKTRGKVGINELLRTID.

Substrate is bound by residues R104 and D141.

Belongs to the transferase hexapeptide repeat family. In terms of assembly, homotrimer.

It is found in the cytoplasm. The enzyme catalyses (S)-2,3,4,5-tetrahydrodipicolinate + succinyl-CoA + H2O = (S)-2-succinylamino-6-oxoheptanedioate + CoA. The protein operates within amino-acid biosynthesis; L-lysine biosynthesis via DAP pathway; LL-2,6-diaminopimelate from (S)-tetrahydrodipicolinate (succinylase route): step 1/3. This is 2,3,4,5-tetrahydropyridine-2,6-dicarboxylate N-succinyltransferase from Serratia proteamaculans (strain 568).